The following is a 365-amino-acid chain: LIM and cysteine-rich domains protein 1 (365 aa).

A Phosphoserine modification is found at serine 16. One can recognise a PET domain in the interval 99–206; the sequence is MIMTNPIATG…GEVALPGQGG (108 aa). The interval 200-235 is disordered; it reads ALPGQGGLPKEEGKQQEKPEGAETTAATTNGSLSDP. The segment covering 208–220 has biased composition (basic and acidic residues); it reads PKEEGKQQEKPEG. 2 consecutive LIM zinc-binding domains span residues 241 to 306 and 307 to 365; these read YVCE…SLRP and RCSG…SKRS.

As to quaternary structure, interacts with GATA1 and GATA4. Interacts with beta-dystroglycan. Interacts with GATA6. As to expression, expressed in the heart (at protein level). Expressed in many tissues with highest abundance in skeletal muscle.

Its subcellular location is the cytoplasm. It is found in the nucleus. Its function is as follows. Transcriptional cofactor that restricts GATA6 function by inhibiting DNA-binding, resulting in repression of GATA6 transcriptional activation of downstream target genes. Represses GATA6-mediated trans activation of lung- and cardiac tissue-specific promoters. Inhibits DNA-binding by GATA4 and GATA1 to the cTNC promoter. Plays a critical role in the development of cardiac hypertrophy via activation of calcineurin/nuclear factor of activated T-cells signaling pathway. The protein is LIM and cysteine-rich domains protein 1 (LMCD1) of Homo sapiens (Human).